The primary structure comprises 128 residues: Fluoride-specific ion channel FluC (128 aa).

The next 4 helical transmembrane spans lie at 5 to 25, 35 to 55, 67 to 87, and 96 to 116; these read IVAIFVGAGLGALLRWFLSLA, LGTLASNLIGGYVIGVAAVVF, LFVITGFLGGLTTFSTYSVEV, and FGWALAVAALHLTGSFALTAL. The Na(+) site is built by Gly75 and Thr78.

It belongs to the fluoride channel Fluc/FEX (TC 1.A.43) family.

The protein localises to the cell inner membrane. It catalyses the reaction fluoride(in) = fluoride(out). Its activity is regulated as follows. Na(+) is not transported, but it plays an essential structural role and its presence is essential for fluoride channel function. Functionally, fluoride-specific ion channel. Important for reducing fluoride concentration in the cell, thus reducing its toxicity. In Burkholderia cenocepacia (strain HI2424), this protein is Fluoride-specific ion channel FluC.